The chain runs to 423 residues: Serine hydroxymethyltransferase (423 aa).

Residues L120 and 124–126 (GHL) each bind (6S)-5,6,7,8-tetrahydrofolate. N6-(pyridoxal phosphate)lysine is present on K229. 353–355 (SPF) is a binding site for (6S)-5,6,7,8-tetrahydrofolate.

The protein belongs to the SHMT family. In terms of assembly, homodimer. Requires pyridoxal 5'-phosphate as cofactor.

It is found in the cytoplasm. The enzyme catalyses (6R)-5,10-methylene-5,6,7,8-tetrahydrofolate + glycine + H2O = (6S)-5,6,7,8-tetrahydrofolate + L-serine. Its pathway is one-carbon metabolism; tetrahydrofolate interconversion. It functions in the pathway amino-acid biosynthesis; glycine biosynthesis; glycine from L-serine: step 1/1. Functionally, catalyzes the reversible interconversion of serine and glycine with tetrahydrofolate (THF) serving as the one-carbon carrier. This reaction serves as the major source of one-carbon groups required for the biosynthesis of purines, thymidylate, methionine, and other important biomolecules. Also exhibits THF-independent aldolase activity toward beta-hydroxyamino acids, producing glycine and aldehydes, via a retro-aldol mechanism. In Prochlorococcus marinus (strain MIT 9515), this protein is Serine hydroxymethyltransferase.